The chain runs to 340 residues: Uroporphyrinogen decarboxylase (340 aa).

Substrate is bound by residues 21-25 (RQAGR), Asp-71, Tyr-147, Ser-202, and His-315.

It belongs to the uroporphyrinogen decarboxylase family. Homodimer.

Its subcellular location is the cytoplasm. It catalyses the reaction uroporphyrinogen III + 4 H(+) = coproporphyrinogen III + 4 CO2. The protein operates within porphyrin-containing compound metabolism; protoporphyrin-IX biosynthesis; coproporphyrinogen-III from 5-aminolevulinate: step 4/4. Its function is as follows. Catalyzes the decarboxylation of four acetate groups of uroporphyrinogen-III to yield coproporphyrinogen-III. The chain is Uroporphyrinogen decarboxylase from Nautilia profundicola (strain ATCC BAA-1463 / DSM 18972 / AmH).